The chain runs to 308 residues: HTH-type transcriptional activator AllS (308 aa).

The HTH lysR-type domain maps to Phe-2 to Thr-59. Positions Phe-19–Lys-38 form a DNA-binding region, H-T-H motif.

This sequence belongs to the LysR transcriptional regulatory family.

Functionally, positive regulator essential for the expression of allD operon. Binds to the allD promoter. In Escherichia coli O1:K1 / APEC, this protein is HTH-type transcriptional activator AllS (allS).